The primary structure comprises 159 residues: Ribosomal RNA large subunit methyltransferase H (159 aa).

Residues leucine 76, glycine 108, and 127–132 each bind S-adenosyl-L-methionine; that span reads FSKMTF.

This sequence belongs to the RNA methyltransferase RlmH family. Homodimer.

The protein resides in the cytoplasm. It catalyses the reaction pseudouridine(1915) in 23S rRNA + S-adenosyl-L-methionine = N(3)-methylpseudouridine(1915) in 23S rRNA + S-adenosyl-L-homocysteine + H(+). Specifically methylates the pseudouridine at position 1915 (m3Psi1915) in 23S rRNA. This is Ribosomal RNA large subunit methyltransferase H from Staphylococcus carnosus (strain TM300).